The chain runs to 267 residues: Undecaprenyl-diphosphatase (267 aa).

A run of 8 helical transmembrane segments spans residues M1–I21, Q39–F59, W87–I107, L111–V131, A149–I169, F189–L209, F218–L238, and M246–L266.

This sequence belongs to the UppP family.

The protein resides in the cell inner membrane. It carries out the reaction di-trans,octa-cis-undecaprenyl diphosphate + H2O = di-trans,octa-cis-undecaprenyl phosphate + phosphate + H(+). In terms of biological role, catalyzes the dephosphorylation of undecaprenyl diphosphate (UPP). Confers resistance to bacitracin. In Aliivibrio salmonicida (strain LFI1238) (Vibrio salmonicida (strain LFI1238)), this protein is Undecaprenyl-diphosphatase.